We begin with the raw amino-acid sequence, 395 residues long: 1-deoxy-D-xylulose 5-phosphate reductoisomerase (395 aa).

T10, G11, S12, I13, N38, and N122 together coordinate NADPH. Residue K123 coordinates 1-deoxy-D-xylulose 5-phosphate. E124 provides a ligand contact to NADPH. A Mn(2+)-binding site is contributed by D148. Residues S149, E150, S178, and H200 each coordinate 1-deoxy-D-xylulose 5-phosphate. E150 contributes to the Mn(2+) binding site. Residue G206 coordinates NADPH. 1-deoxy-D-xylulose 5-phosphate-binding residues include S213, N218, K219, and E222. E222 provides a ligand contact to Mn(2+).

It belongs to the DXR family. Mg(2+) serves as cofactor. It depends on Mn(2+) as a cofactor.

The enzyme catalyses 2-C-methyl-D-erythritol 4-phosphate + NADP(+) = 1-deoxy-D-xylulose 5-phosphate + NADPH + H(+). It participates in isoprenoid biosynthesis; isopentenyl diphosphate biosynthesis via DXP pathway; isopentenyl diphosphate from 1-deoxy-D-xylulose 5-phosphate: step 1/6. In terms of biological role, catalyzes the NADPH-dependent rearrangement and reduction of 1-deoxy-D-xylulose-5-phosphate (DXP) to 2-C-methyl-D-erythritol 4-phosphate (MEP). This Elusimicrobium minutum (strain Pei191) protein is 1-deoxy-D-xylulose 5-phosphate reductoisomerase.